Here is a 1380-residue protein sequence, read N- to C-terminus: Hepatocyte growth factor receptor (1380 aa).

The N-terminal stretch at M1 to G24 is a signal peptide. Residues E25 to T931 lie on the Extracellular side of the membrane. The 487-residue stretch at R27 to L513 folds into the Sema domain. Residue N45 is glycosylated (N-linked (GlcNAc...) asparagine). Disulfide bonds link C95/C101, C98/C156, C129/C137, and C170/C173. Residue N200 is glycosylated (N-linked (GlcNAc...) asparagine). 2 cysteine pairs are disulfide-bonded: C296/C361 and C383/C395. N-linked (GlcNAc...) asparagine glycosylation is found at N397 and N403. Intrachain disulfides connect C518–C536, C524–C559, C527–C543, and C539–C549. N551 is a glycosylation site (N-linked (GlcNAc...) asparagine). 3 IPT/TIG domains span residues P561–V654, P656–Q738, and P741–V835. T580 carries an O-linked (Man) threonine glycan. 3 N-linked (GlcNAc...) asparagine glycosylation sites follow: N592, N605, and N633. Residues T675 and T760 are each glycosylated (O-linked (Man) threonine). N-linked (GlcNAc...) asparagine glycosylation is found at N784, N878, and N929. The helical transmembrane segment at G932–L954 threads the bilayer. At K955–T1380 the chain is on the cytoplasmic side. S965 bears the Phosphoserine mark. Phosphothreonine is present on T976. Phosphoserine is present on residues S989, S996, and S999. Y1002 is modified (phosphotyrosine). The Protein kinase domain maps to V1077 to I1344. ATP-binding positions include I1083 to V1091 and K1109. Catalysis depends on D1203, which acts as the Proton acceptor. The segment at L1211–T1380 is interaction with RANBP9. Y1229 bears the Phosphotyrosine mark. Phosphotyrosine; by autocatalysis is present on residues Y1233 and Y1234. T1288 is modified (phosphothreonine). The tract at residues W1319–V1358 is interaction with MUC20. A phosphotyrosine; by autocatalysis mark is found at Y1348 and Y1355. Y1364 bears the Phosphotyrosine mark.

It belongs to the protein kinase superfamily. Tyr protein kinase family. In terms of assembly, heterodimer made of an alpha chain (50 kDa) and a beta chain (145 kDa) which are disulfide linked. Binds PLXNB1. Interacts when phosphorylated with downstream effectors including STAT3, PIK3R1, SRC, PCLG1, GRB2 and GAB1. Interacts with SPSB1, SPSB2 and SPSB4. Interacts with INPP5D/SHIP1. When phosphorylated at Tyr-1355, interacts with INPPL1/SHIP2. Interacts with RANBP9 and RANBP10, as well as SPSB1, SPSB2, SPSB3 and SPSB4. SPSB1 binding occurs in the presence and in the absence of HGF, however HGF treatment has a positive effect on this interaction. Interacts with MUC20; prevents interaction with GRB2 and suppresses hepatocyte growth factor-induced cell proliferation. Interacts with GRB10. Interacts with PTPN1 and PTPN2. Interacts with HSP90AA1 and HSP90AB1; the interaction suppresses MET kinase activity. Interacts with tensin TNS3. Interacts (when phosphorylated) with tensin TNS4 (via SH2 domain); the interaction increases MET protein stability by inhibiting MET endocytosis and subsequent lysosomal degradation. Autophosphorylated in response to ligand binding on Tyr-1233 and Tyr-1234 in the kinase domain leading to further phosphorylation of Tyr-1348 and Tyr-1355 in the C-terminal multifunctional docking site. Dephosphorylated by PTPRJ at Tyr-1348 and Tyr-1364. Dephosphorylated by PTPN1 and PTPN2. In terms of processing, ubiquitinated. Ubiquitination by CBL regulates the receptor stability and activity through proteasomal degradation. Post-translationally, O-mannosylation of IPT/TIG domains by TMEM260 is required for protein maturation. O-mannosylated residues are composed of single mannose glycans that are not elongated or modified.

It is found in the membrane. It carries out the reaction L-tyrosyl-[protein] + ATP = O-phospho-L-tyrosyl-[protein] + ADP + H(+). In its inactive state, the C-terminal tail interacts with the catalytic domain and inhibits the kinase activity. Upon ligand binding, the C-terminal tail is displaced and becomes phosphorylated, thus increasing the kinase activity. In terms of biological role, receptor tyrosine kinase that transduces signals from the extracellular matrix into the cytoplasm by binding to hepatocyte growth factor/HGF ligand. Regulates many physiological processes including proliferation, scattering, morphogenesis and survival. Ligand binding at the cell surface induces autophosphorylation of MET on its intracellular domain that provides docking sites for downstream signaling molecules. Following activation by ligand, interacts with the PI3-kinase subunit PIK3R1, PLCG1, SRC, GRB2, STAT3 or the adapter GAB1. Recruitment of these downstream effectors by MET leads to the activation of several signaling cascades including the RAS-ERK, PI3 kinase-AKT, or PLCgamma-PKC. The RAS-ERK activation is associated with the morphogenetic effects while PI3K/AKT coordinates prosurvival effects. During embryonic development, MET signaling plays a role in gastrulation, development and migration of muscles and neuronal precursors, angiogenesis and kidney formation. In adults, participates in wound healing as well as organ regeneration and tissue remodeling. Also promotes differentiation and proliferation of hematopoietic cells. The protein is Hepatocyte growth factor receptor (MET) of Echinops telfairi (Lesser hedgehog tenrec).